We begin with the raw amino-acid sequence, 375 residues long: MKIVVDENMPYAEALFGRLGEVVAVRGRPLPAAALVGADALMVRSVTTVNQALLAGQRVRFVGTATAGTDHVDTAWLAQAGIGFSAAPGCNAIAVVEYVFSALMLLAERDGFALRDKTVGIVGVGNVGSRLQRRLTALGIRTLLCDPPRADRGDDEQFHSLADLQREADIITFHTPLNKSGPYRTLHLADADFLRGLPPGRILINAGRGAVVDNAALLQALEAGQDLRVVLDVWEPEPMLSLPLLARVDIATPHIAGYSLEGKARGTTQVFEAFSTFLGQPQSVVLPSLLPPPPVASVRIHGHPDQAMLKRLMHLVYDVRRDDVPLRRVAAQEGEFDRLRKHYPARREWSSLQVLCDDCTSASLLTALGFDARVA.

Positions 45 and 66 each coordinate substrate. The NAD(+) site is built by aspartate 146 and threonine 175. The active site involves arginine 208. Aspartate 232 serves as a coordination point for NAD(+). Residue glutamate 237 is part of the active site. Histidine 254 serves as the catalytic Proton donor. Glycine 257 contacts NAD(+). Tyrosine 258 lines the substrate pocket.

Belongs to the D-isomer specific 2-hydroxyacid dehydrogenase family. PdxB subfamily. As to quaternary structure, homodimer.

The protein resides in the cytoplasm. It carries out the reaction 4-phospho-D-erythronate + NAD(+) = (R)-3-hydroxy-2-oxo-4-phosphooxybutanoate + NADH + H(+). Its pathway is cofactor biosynthesis; pyridoxine 5'-phosphate biosynthesis; pyridoxine 5'-phosphate from D-erythrose 4-phosphate: step 2/5. In terms of biological role, catalyzes the oxidation of erythronate-4-phosphate to 3-hydroxy-2-oxo-4-phosphonooxybutanoate. The chain is Erythronate-4-phosphate dehydrogenase from Edwardsiella ictaluri (strain 93-146).